Reading from the N-terminus, the 258-residue chain is NAD kinase (258 aa).

Catalysis depends on Asp-51, which acts as the Proton acceptor. NAD(+) is bound by residues 51–52, Lys-56, 119–120, Lys-130, Asp-149, 160–165, and Ala-184; these read DG, ND, and TAYSLS.

The protein belongs to the NAD kinase family. A divalent metal cation serves as cofactor.

It localises to the cytoplasm. It catalyses the reaction NAD(+) + ATP = ADP + NADP(+) + H(+). Involved in the regulation of the intracellular balance of NAD and NADP, and is a key enzyme in the biosynthesis of NADP. Catalyzes specifically the phosphorylation on 2'-hydroxyl of the adenosine moiety of NAD to yield NADP. This chain is NAD kinase, found in Thermotoga sp. (strain RQ2).